A 117-amino-acid polypeptide reads, in one-letter code: Large ribosomal subunit protein bL20 (117 aa).

The protein belongs to the bacterial ribosomal protein bL20 family.

Its function is as follows. Binds directly to 23S ribosomal RNA and is necessary for the in vitro assembly process of the 50S ribosomal subunit. It is not involved in the protein synthesizing functions of that subunit. The chain is Large ribosomal subunit protein bL20 from Campylobacter fetus subsp. fetus (strain 82-40).